We begin with the raw amino-acid sequence, 137 residues long: ATP synthase epsilon chain (137 aa).

Belongs to the ATPase epsilon chain family. In terms of assembly, F-type ATPases have 2 components, CF(1) - the catalytic core - and CF(0) - the membrane proton channel. CF(1) has five subunits: alpha(3), beta(3), gamma(1), delta(1), epsilon(1). CF(0) has three main subunits: a, b and c.

It is found in the cell membrane. Functionally, produces ATP from ADP in the presence of a proton gradient across the membrane. The chain is ATP synthase epsilon chain from Syntrophomonas wolfei subsp. wolfei (strain DSM 2245B / Goettingen).